A 208-amino-acid polypeptide reads, in one-letter code: Uracil phosphoribosyltransferase (208 aa).

Residues R78, R103, and 130–138 (DPMLATGGS) each bind 5-phospho-alpha-D-ribose 1-diphosphate. Uracil is bound by residues I193 and 198 to 200 (GDA). Residue D199 participates in 5-phospho-alpha-D-ribose 1-diphosphate binding.

Belongs to the UPRTase family. The cofactor is Mg(2+).

It catalyses the reaction UMP + diphosphate = 5-phospho-alpha-D-ribose 1-diphosphate + uracil. It participates in pyrimidine metabolism; UMP biosynthesis via salvage pathway; UMP from uracil: step 1/1. Allosterically activated by GTP. Catalyzes the conversion of uracil and 5-phospho-alpha-D-ribose 1-diphosphate (PRPP) to UMP and diphosphate. This Pectobacterium atrosepticum (strain SCRI 1043 / ATCC BAA-672) (Erwinia carotovora subsp. atroseptica) protein is Uracil phosphoribosyltransferase.